We begin with the raw amino-acid sequence, 72 residues long: Holocyclotoxin-1 (72 aa).

The N-terminal stretch at 1-22 (MSKVTTVFIGALVLLLLIENGF) is a signal peptide. 4 disulfide bridges follow: Cys24-Cys40, Cys32-Cys57, Cys36-Cys60, and Cys42-Cys70.

In terms of tissue distribution, expressed in salivary glands.

The protein resides in the secreted. Probable neurotoxin. In Ixodes holocyclus (Australian paralysis tick), this protein is Holocyclotoxin-1.